The primary structure comprises 93 residues: YcgL domain-containing protein Spea_2443 (93 aa).

The region spanning Met-1 to Lys-85 is the YcgL domain.

In Shewanella pealeana (strain ATCC 700345 / ANG-SQ1), this protein is YcgL domain-containing protein Spea_2443.